The primary structure comprises 64 residues: uncharacterized protein (64 aa).

The next 2 membrane-spanning stretches (helical) occupy residues 4–24 (IYQY…WLAY) and 35–55 (MYLN…TFGM).

Its subcellular location is the cell membrane. This is an uncharacterized protein from Bacillus subtilis (strain 168).